The sequence spans 505 residues: Zealexin A1 synthase (505 aa).

The helical transmembrane segment at 7 to 26 (IAVGTVAVVAVLSKLKSAVT) threads the bilayer. Cys-442 contacts heme.

The protein belongs to the cytochrome P450 family. It depends on heme as a cofactor.

The protein localises to the membrane. It catalyses the reaction (S)-beta-macrocarpene + 3 reduced [NADPH--hemoprotein reductase] + 3 O2 = zealexin A1 + 3 oxidized [NADPH--hemoprotein reductase] + 4 H2O + 4 H(+). In terms of biological role, involved in production of the antifungal phytoalexin zealexin A1. The enzyme sequentially oxidizes(S)-beta-macrocarpene via alcohol and aldehyde intermediates to form zealexin A1, a maize phytoalexin that provides biochemical protection against fungal infection. The protein is Zealexin A1 synthase of Zea mays (Maize).